Reading from the N-terminus, the 423-residue chain is Glutamyl-tRNA reductase (423 aa).

Residues T49 to R52, S106, E111 to Q113, and Q117 contribute to the substrate site. C50 acts as the Nucleophile in catalysis. G186–S191 provides a ligand contact to NADP(+).

This sequence belongs to the glutamyl-tRNA reductase family. Homodimer.

The catalysed reaction is (S)-4-amino-5-oxopentanoate + tRNA(Glu) + NADP(+) = L-glutamyl-tRNA(Glu) + NADPH + H(+). The protein operates within porphyrin-containing compound metabolism; protoporphyrin-IX biosynthesis; 5-aminolevulinate from L-glutamyl-tRNA(Glu): step 1/2. Catalyzes the NADPH-dependent reduction of glutamyl-tRNA(Glu) to glutamate 1-semialdehyde (GSA). This chain is Glutamyl-tRNA reductase, found in Idiomarina loihiensis (strain ATCC BAA-735 / DSM 15497 / L2-TR).